The primary structure comprises 277 residues: F420-dependent methylenetetrahydromethanopterin dehydrogenase (277 aa).

The protein belongs to the MTD family.

It carries out the reaction 5,10-methylenetetrahydromethanopterin + oxidized coenzyme F420-(gamma-L-Glu)(n) + 2 H(+) = 5,10-methenyl-5,6,7,8-tetrahydromethanopterin + reduced coenzyme F420-(gamma-L-Glu)(n). Its pathway is one-carbon metabolism; methanogenesis from CO(2); 5,10-methylene-5,6,7,8-tetrahydromethanopterin from 5,10-methenyl-5,6,7,8-tetrahydromethanopterin (coenzyme F420 route): step 1/1. In terms of biological role, catalyzes the reversible reduction of methenyl-H(4)MPT(+) to methylene-H(4)MPT. The sequence is that of F420-dependent methylenetetrahydromethanopterin dehydrogenase from Methanococcus maripaludis (strain DSM 14266 / JCM 13030 / NBRC 101832 / S2 / LL).